The chain runs to 492 residues: Probable Xaa-Pro aminopeptidase ACLA_020440 (492 aa).

Residues aspartate 272, aspartate 283, glutamate 421, and glutamate 460 each contribute to the Mn(2+) site.

This sequence belongs to the peptidase M24B family. Mn(2+) is required as a cofactor.

The catalysed reaction is Release of any N-terminal amino acid, including proline, that is linked to proline, even from a dipeptide or tripeptide.. In terms of biological role, catalyzes the removal of a penultimate prolyl residue from the N-termini of peptides. This is Probable Xaa-Pro aminopeptidase ACLA_020440 from Aspergillus clavatus (strain ATCC 1007 / CBS 513.65 / DSM 816 / NCTC 3887 / NRRL 1 / QM 1276 / 107).